Here is an 81-residue protein sequence, read N- to C-terminus: Extracellular matrix regulatory protein B (81 aa).

In terms of biological role, regulates the biosynthesis of the extracellular matrix and the biofilm formation. May act as an enhancer of biofilm gene expression. Acts in parallel to the pathway that governs SinR derepression. This Bacillus subtilis (strain 168) protein is Extracellular matrix regulatory protein B.